The primary structure comprises 461 residues: Photosystem II CP43 reaction center protein (461 aa).

The propeptide occupies 1–2; that stretch reads ME. N-acetylthreonine is present on Thr3. A Phosphothreonine modification is found at Thr3. 5 consecutive transmembrane segments (helical) span residues 57–81, 122–143, 166–188, 243–263, and 279–300; these read LFEV…PHLA, LIGP…KDKN, KALY…RIIT, QPWA…LSYS, and WFNN…ASQS. Glu355 contributes to the [CaMn4O5] cluster binding site. Residues 435–459 traverse the membrane as a helical segment; that stretch reads RARAAAAGFEKGIDRFNEPTLSLRP.

Belongs to the PsbB/PsbC family. PsbC subfamily. In terms of assembly, PSII is composed of 1 copy each of membrane proteins PsbA, PsbB, PsbC, PsbD, PsbE, PsbF, PsbH, PsbI, PsbJ, PsbK, PsbL, PsbM, PsbT, PsbX, PsbY, PsbZ, Psb30/Ycf12, at least 3 peripheral proteins of the oxygen-evolving complex and a large number of cofactors. It forms dimeric complexes. It depends on Binds multiple chlorophylls and provides some of the ligands for the Ca-4Mn-5O cluster of the oxygen-evolving complex. It may also provide a ligand for a Cl- that is required for oxygen evolution. PSII binds additional chlorophylls, carotenoids and specific lipids. as a cofactor.

The protein localises to the plastid. Its subcellular location is the chloroplast thylakoid membrane. Its function is as follows. One of the components of the core complex of photosystem II (PSII). It binds chlorophyll and helps catalyze the primary light-induced photochemical processes of PSII. PSII is a light-driven water:plastoquinone oxidoreductase, using light energy to abstract electrons from H(2)O, generating O(2) and a proton gradient subsequently used for ATP formation. The polypeptide is Photosystem II CP43 reaction center protein (Oedogonium cardiacum (Filamentous green alga)).